The sequence spans 2645 residues: Non-reducing polyketide synthase AC (2645 aa).

An N-terminal acylcarrier protein transacylase domain (SAT) region spans residues 73-2366 (ALQNLNEWLK…TDIVHNAWPM (2294 aa)). His-260 acts as the Proton donor/acceptor; for transacylase activity in catalysis. The 419-residue stretch at 416-834 (DDKIAVIGMA…GSNSSLVVTE (419 aa)) folds into the Ketosynthase family 3 (KS3) domain. Residues Cys-583, His-718, and His-757 each act as for beta-ketoacyl synthase activity in the active site. The segment at 943 to 1252 (CFGGQISTYI…HAVSITTDKS (310 aa)) is malonyl-CoA:ACP transacylase (MAT) domain. The N-terminal hotdog fold stretch occupies residues 1324–1457 (SKGFTSFAGY…GVCSFCSATD (134 aa)). Residues 1324–1637 (SKGFTSFAGY…YNKVPLPVMR (314 aa)) form the PKS/mFAS DH domain. The product template (PT) domain stretch occupies residues 1330-1641 (FAGYIDGNQR…PLPVMRGILG (312 aa)). His-1359 serves as the catalytic Proton acceptor; for dehydratase activity. Residues 1487-1637 (NIMQGTANIY…YNKVPLPVMR (151 aa)) form a C-terminal hotdog fold region. The active-site Proton donor; for dehydratase activity is the Asp-1542. Residues 1684 to 1696 (NGTTGTENPQIKS) show a composition bias toward polar residues. The disordered stretch occupies residues 1684–1716 (NGTTGTENPQIKSKTNKVKKVPTRKSGGSDLET). Residues 1697–1706 (KTNKVKKVPT) show a composition bias toward basic residues. Positions 1711 to 1788 (GSDLETPAKT…SLVKYIREIR (78 aa)) constitute a Carrier domain. Ser-1748 is subject to O-(pantetheine 4'-phosphoryl)serine. Positions 1794 to 1805 (QNVDDSESESEE) are enriched in acidic residues. The disordered stretch occupies residues 1794–1816 (QNVDDSESESEELQQQATPIDSA). Tyr-2009 serves as the catalytic For methyltransferase activity. The methyltransferase (CMeT) domain stretch occupies residues 2023 to 2197 (EVFVEKIGSS…SVGYGHVDWT (175 aa)). Positions 2269–2573 (CVLITGATGS…NIIPFYDWVQ (305 aa)) are NADPH-binding (R) domain.

The protein operates within mycotoxin biosynthesis. Functionally, non-reducing polyketide synthase; part of the gene cluster that mediates the biosynthesis of the selective antifungal agent ascochitine, an o-quinone methide that plays a possible protective role against other microbial competitors in nature and is considered to be important for pathogenicity of legume-associated Didymella species. The pathway probably begins with the synthesis of a keto-aldehyde intermediate by the ascochitine non-reducing polyketide synthase pksAC from successive condensations of 4 malonyl-CoA units, presumably with a simple acetyl-CoA starter unit. Release of the keto-aldehyde intermediate is consistent with the presence of the C-terminal reductive release domain. The HR-PKS (orf7) probably makes a diketide starter unit which is passed to the non-reducing polyketide synthase pksAC for further extension, producing ascochital and ascochitine. The aldehyde dehydrogenase (orf1), the 2-oxoglutarate-dependent dioxygenase (orf3) and the dehydrogenase (orf9) are probably involved in subsequent oxidations of methyl groups to the carboxylic acid of the heterocyclic ring. The ascochitine gene cluster also includes a gene encoding a short peptide (orf2) that is often found in secondary metabolite gene clusters and which function has still to be determined. In Didymella fabae (Leaf and pod spot disease fungus), this protein is Non-reducing polyketide synthase AC.